The sequence spans 94 residues: ESAT-6-like protein EsxI (94 aa).

This sequence belongs to the WXG100 family. ESAT-6 subfamily.

It localises to the secreted. This is ESAT-6-like protein EsxI from Mycobacterium tuberculosis (strain ATCC 25618 / H37Rv).